A 252-amino-acid chain; its full sequence is Hydroxyacylglutathione hydrolase (252 aa).

Zn(2+)-binding residues include His-52, His-54, Asp-56, His-57, His-107, Asp-128, and His-166.

It belongs to the metallo-beta-lactamase superfamily. Glyoxalase II family. In terms of assembly, monomer. Requires Zn(2+) as cofactor.

It carries out the reaction an S-(2-hydroxyacyl)glutathione + H2O = a 2-hydroxy carboxylate + glutathione + H(+). The protein operates within secondary metabolite metabolism; methylglyoxal degradation; (R)-lactate from methylglyoxal: step 2/2. In terms of biological role, thiolesterase that catalyzes the hydrolysis of S-D-lactoyl-glutathione to form glutathione and D-lactic acid. The protein is Hydroxyacylglutathione hydrolase of Neisseria meningitidis serogroup C (strain 053442).